The chain runs to 338 residues: Mitochondrial amidoxime reducing component 2 (338 aa).

The N-terminal 35 residues, 1-35, are a transit peptide targeting the mitochondrion; the sequence is MGSSSSTALARLGLPGQPRSTWLGVAALGLAAVAL. Glycyl lysine isopeptide (Lys-Gly) (interchain with G-Cter in ubiquitin) cross-links involve residues Lys-59, Lys-138, and Lys-144. Lys-156 carries the N6-acetyllysine; alternate modification. Residue Lys-156 forms a Glycyl lysine isopeptide (Lys-Gly) (interchain with G-Cter in ubiquitin); alternate linkage. Glycyl lysine isopeptide (Lys-Gly) (interchain with G-Cter in ubiquitin) cross-links involve residues Lys-173, Lys-187, Lys-289, and Lys-296. Residues 188–336 form the MOSC domain; that stretch reads GRTTKKLYPS…LRVGDPVYRM (149 aa).

In terms of assembly, component of a complex composed of cytochrome b5, NADH-cytochrome b5 reductase (CYB5R3) and MTARC2. Mo-molybdopterin is required as a cofactor. Ubiquitinated by PRKN during mitophagy, leading to its degradation and enhancement of mitophagy. Deubiquitinated by USP30.

It is found in the mitochondrion outer membrane. It localises to the peroxisome. The catalysed reaction is N(omega)-hydroxy-L-arginine + 2 Fe(II)-[cytochrome b5] + 2 H(+) = L-arginine + 2 Fe(III)-[cytochrome b5] + H2O. Functionally, catalyzes the reduction of N-oxygenated molecules, acting as a counterpart of cytochrome P450 and flavin-containing monooxygenases in metabolic cycles. As a component of prodrug-converting system, reduces a multitude of N-hydroxylated prodrugs particularly amidoximes, leading to increased drug bioavailability. May be involved in mitochondrial N(omega)-hydroxy-L-arginine (NOHA) reduction, regulating endogenous nitric oxide levels and biosynthesis. Postulated to cleave the N-OH bond of N-hydroxylated substrates in concert with electron transfer from NADH to cytochrome b5 reductase then to cytochrome b5, the ultimate electron donor that primes the active site for substrate reduction. The protein is Mitochondrial amidoxime reducing component 2 (Mtarc2) of Rattus norvegicus (Rat).